A 203-amino-acid polypeptide reads, in one-letter code: High frequency lysogenization protein HflD homolog (203 aa).

The protein belongs to the HflD family.

It localises to the cytoplasm. It is found in the cell inner membrane. The sequence is that of High frequency lysogenization protein HflD homolog from Vesicomyosocius okutanii subsp. Calyptogena okutanii (strain HA).